A 4981-amino-acid chain; its full sequence is Protocadherin Fat 4 (4981 aa).

The first 42 residues, 1 to 42 (MNLAANRAPGRRRLPLPSPSLCQLLRVWGLLSLLPGSARVQA), serve as a signal peptide directing secretion. Over 43–4505 (AEQRQVFQVM…PDEISLPLWA (4463 aa)) the chain is Extracellular. 34 consecutive Cadherin domains span residues 44-135 (EQRQ…APVF), 136-250 (PDPS…PPVF), 251-353 (GSSH…DPVV), 359-475 (PATS…PPVF), 476-582 (EQQV…KPVF), 584-689 (QPEG…SPVF), 690-793 (YPVQ…PPVF), 794-893 (SQAA…APHF), 894-996 (LQAV…PPVF), 997-1100 (DQIS…RPLF), 1101-1210 (NSTN…APKF), 1211-1315 (LKDF…TPSF), 1316-1420 (PKST…PPSF), 1421-1529 (PPGD…VPMF), 1529-1629 (FISQ…GPVF), 1630-1740 (TQTK…PPVF), 1741-1841 (PTDT…TPRF), 1842-1944 (SRPV…PPVF), 1945-2051 (SMSS…PPMF), 2051-2154 (FLSP…NPVF), 2155-2259 (AQAM…VPVF), 2260-2364 (ELSP…VPTF), 2365-2468 (ANNM…PPRF), 2469-2569 (QHHP…FPKV), 2570-2671 (RAKE…APTF), 2672-2775 (EEDP…APRF), 2775-2874 (FSQI…TPRF), 2875-2985 (SRPS…PPQF), 2986-3091 (LQNK…TPEF), 3092-3196 (SQNH…SPVF), 3197-3300 (VPDE…VPRF), 3301-3406 (VSKL…PPVF), 3407-3512 (SLST…GPVL), and 3511-3622 (VLTV…VEIF). Asn-84 and Asn-237 each carry an N-linked (GlcNAc...) asparagine glycan. 18 N-linked (GlcNAc...) asparagine glycosylation sites follow: Asn-393, Asn-416, Asn-435, Asn-483, Asn-551, Asn-615, Asn-676, Asn-721, Asn-825, Asn-880, Asn-948, Asn-1085, Asn-1101, Asn-1104, Asn-1225, Asn-1296, Asn-1389, and Asn-1514. Residues Asn-1828, Asn-1899, Asn-1967, and Asn-2119 are each glycosylated (N-linked (GlcNAc...) asparagine). Residues Asn-2387 and Asn-2432 are each glycosylated (N-linked (GlcNAc...) asparagine). N-linked (GlcNAc...) asparagine glycosylation is found at Asn-2923, Asn-2939, Asn-3038, Asn-3142, Asn-3219, Asn-3394, and Asn-3479. 2 N-linked (GlcNAc...) asparagine glycosylation sites follow: Asn-3708 and Asn-3760. Residues 3804-3862 (DHDPCIHGPCQNGGSCLRRLAVGSALKIQESLPVIIVANEPLQPSQCKCVPGYAGSWCE) enclose the EGF-like 1 domain. Disulfide bonds link Cys-3808–Cys-3819, Cys-3813–Cys-3850, Cys-3852–Cys-3861, Cys-3868–Cys-3879, Cys-3873–Cys-3888, Cys-3890–Cys-3899, Cys-3906–Cys-3917, Cys-3911–Cys-3926, Cys-3928–Cys-3937, Cys-3944–Cys-3955, Cys-3949–Cys-3964, and Cys-3966–Cys-3975. One can recognise an EGF-like 2; calcium-binding domain in the interval 3864–3900 (DIDECLPAPCHNGGTCHNLVGGFSCSCPEGFTGRACE). One can recognise an EGF-like 3; calcium-binding domain in the interval 3902 to 3938 (DINECLPSPCKHGAVCQNFPGGFNCVCKTGYTGKMCE). Positions 3940–3976 (SVNYCECNPCFNGGSCQSGVESYYCHCPFGVFGKHCE) constitute an EGF-like 4 domain. Positions 3977 to 4161 (LNSYGFEELS…LAAQGILDQC (185 aa)) constitute a Laminin G-like 1 domain. Asn-4019 is a glycosylation site (N-linked (GlcNAc...) asparagine). Disulfide bonds link Cys-4135-Cys-4161, Cys-4168-Cys-4179, Cys-4173-Cys-4188, and Cys-4190-Cys-4199. Residues 4164–4200 (LEGTCARNPCQHGGTCVDFWSWQQCQCMEGLTGKYCE) form the EGF-like 5 domain. A Laminin G-like 2 domain is found at 4219–4399 (YHMSQSEKRE…KTDPSVKIGC (181 aa)). Asn-4269 and Asn-4314 each carry an N-linked (GlcNAc...) asparagine glycan. 4 disulfides stabilise this stretch: Cys-4366-Cys-4399, Cys-4431-Cys-4442, Cys-4436-Cys-4452, and Cys-4454-Cys-4463. The 38-residue stretch at 4427 to 4464 (PPGDCASHPCQNGGSCEPGLLSGYTCSCPESHTGRTCE) folds into the EGF-like 6 domain. A helical membrane pass occupies residues 4506–4526 (VPAIVGSCATALALLVLSLIL). Over 4527–4981 (CNQCRGKMPK…AKDGEAEQYV (455 aa)) the chain is Cytoplasmic. Disordered regions lie at residues 4535–4585 (PKNP…PDII), 4677–4713 (PSSY…KPSA), 4753–4773 (RRSK…SRLK), 4796–4911 (RLNT…PAAA), and 4957–4981 (AAGN…EQYV). Positions 4677–4701 (PSSYGQGLRTSSLSHSACPTPNPLS) are enriched in polar residues. Positions 4708-4797 (FSKPSAFYRN…GLSIEEVERL (90 aa)) are necessary and sufficient for interaction with MPDZ. The span at 4811–4823 (DHGRSSSEEDCRR) shows a compositional bias: basic and acidic residues. At Ser-4878 the chain carries Phosphoserine. Basic and acidic residues predominate over residues 4971–4981 (AAKDGEAEQYV).

As to quaternary structure, heterophilic interaction with DCHS1; this interaction affects their respective protein levels. Interacts (via cytoplasmic domain) with MPDZ. Forms a complex with PALS1 and MPDZ. Widely expressed.

Its subcellular location is the membrane. Cadherins are cell-cell interaction molecules. FAT4 plays a role in the maintenance of planar cell polarity as well as in inhibition of YAP1-mediated neuroprogenitor cell proliferation and differentiation. This Mus musculus (Mouse) protein is Protocadherin Fat 4 (Fat4).